A 294-amino-acid polypeptide reads, in one-letter code: HTH-type transcriptional regulator ClcR (294 aa).

Residues 1 to 58 (MEFRQLRYFIAVAEEGNIGAAARRLHISQPPITRQIQALEQDLGVVLFERTHRGVELT) form the HTH lysR-type domain. Positions 18 to 37 (IGAAARRLHISQPPITRQIQ) form a DNA-binding region, H-T-H motif.

Belongs to the LysR transcriptional regulatory family.

The protein localises to the cytoplasm. In terms of biological role, involved in regulation of chlorinated catechol metabolism. Transcriptional activator of the clcABD chlorocatechol oxidative operon. The polypeptide is HTH-type transcriptional regulator ClcR (clcR) (Pseudomonas putida (Arthrobacter siderocapsulatus)).